Consider the following 452-residue polypeptide: Chaperone SurA (452 aa).

Positions 1 to 28 (MKKTLRFAAVVSSLAASAALLVAAPAAA) are cleaved as a signal peptide. 2 consecutive PpiC domains span residues 186–288 (QQDL…RLVD) and 302–400 (IVQT…QVLN).

It is found in the periplasm. It catalyses the reaction [protein]-peptidylproline (omega=180) = [protein]-peptidylproline (omega=0). Its function is as follows. Chaperone involved in the correct folding and assembly of outer membrane proteins. Recognizes specific patterns of aromatic residues and the orientation of their side chains, which are found more frequently in integral outer membrane proteins. May act in both early periplasmic and late outer membrane-associated steps of protein maturation. In Burkholderia orbicola (strain AU 1054), this protein is Chaperone SurA.